A 640-amino-acid polypeptide reads, in one-letter code: 1-deoxy-D-xylulose-5-phosphate synthase (640 aa).

Thiamine diphosphate is bound by residues His-72 and 113–115; that span reads GHA. A Mg(2+)-binding site is contributed by Asp-144. Thiamine diphosphate contacts are provided by residues 145–146, Asn-174, Tyr-287, and Glu-370; that span reads GA. Asn-174 is a Mg(2+) binding site.

The protein belongs to the transketolase family. DXPS subfamily. In terms of assembly, homodimer. Mg(2+) is required as a cofactor. Thiamine diphosphate serves as cofactor.

It carries out the reaction D-glyceraldehyde 3-phosphate + pyruvate + H(+) = 1-deoxy-D-xylulose 5-phosphate + CO2. Its pathway is metabolic intermediate biosynthesis; 1-deoxy-D-xylulose 5-phosphate biosynthesis; 1-deoxy-D-xylulose 5-phosphate from D-glyceraldehyde 3-phosphate and pyruvate: step 1/1. Functionally, catalyzes the acyloin condensation reaction between C atoms 2 and 3 of pyruvate and glyceraldehyde 3-phosphate to yield 1-deoxy-D-xylulose-5-phosphate (DXP). The protein is 1-deoxy-D-xylulose-5-phosphate synthase of Synechocystis sp. (strain ATCC 27184 / PCC 6803 / Kazusa).